Consider the following 364-residue polypeptide: 3-dehydroquinate synthase (364 aa).

Residues 71–76, 105–109, 129–130, Lys142, Lys151, and 169–172 each bind NAD(+); these read DGEQYK, GVIGD, TT, and CLKT. Positions 184, 247, and 264 each coordinate Zn(2+).

The protein belongs to the sugar phosphate cyclases superfamily. Dehydroquinate synthase family. The cofactor is Co(2+). It depends on Zn(2+) as a cofactor. NAD(+) is required as a cofactor.

The protein resides in the cytoplasm. The catalysed reaction is 7-phospho-2-dehydro-3-deoxy-D-arabino-heptonate = 3-dehydroquinate + phosphate. The protein operates within metabolic intermediate biosynthesis; chorismate biosynthesis; chorismate from D-erythrose 4-phosphate and phosphoenolpyruvate: step 2/7. In terms of biological role, catalyzes the conversion of 3-deoxy-D-arabino-heptulosonate 7-phosphate (DAHP) to dehydroquinate (DHQ). The protein is 3-dehydroquinate synthase of Klebsiella pneumoniae (strain 342).